A 236-amino-acid polypeptide reads, in one-letter code: Orotidine 5'-phosphate decarboxylase (236 aa).

Substrate contacts are provided by residues aspartate 17, lysine 39, 66-75, threonine 125, arginine 187, glutamine 196, glycine 216, and arginine 217; that span reads DLKFYDIPNT. The Proton donor role is filled by lysine 68.

This sequence belongs to the OMP decarboxylase family. Type 1 subfamily. Homodimer.

It carries out the reaction orotidine 5'-phosphate + H(+) = UMP + CO2. It participates in pyrimidine metabolism; UMP biosynthesis via de novo pathway; UMP from orotate: step 2/2. Functionally, catalyzes the decarboxylation of orotidine 5'-monophosphate (OMP) to uridine 5'-monophosphate (UMP). This is Orotidine 5'-phosphate decarboxylase from Buchnera aphidicola subsp. Baizongia pistaciae (strain Bp).